We begin with the raw amino-acid sequence, 401 residues long: Probable 2,3-bisphosphoglycerate-independent phosphoglycerate mutase (401 aa).

It belongs to the BPG-independent phosphoglycerate mutase family. A-PGAM subfamily.

It carries out the reaction (2R)-2-phosphoglycerate = (2R)-3-phosphoglycerate. It functions in the pathway carbohydrate degradation; glycolysis; pyruvate from D-glyceraldehyde 3-phosphate: step 3/5. Its function is as follows. Catalyzes the interconversion of 2-phosphoglycerate and 3-phosphoglycerate. This chain is Probable 2,3-bisphosphoglycerate-independent phosphoglycerate mutase, found in Thermotoga neapolitana (strain ATCC 49049 / DSM 4359 / NBRC 107923 / NS-E).